The primary structure comprises 212 residues: Phosphatidylserine decarboxylase proenzyme (212 aa).

The active-site Schiff-base intermediate with substrate; via pyruvic acid is the Ser182. Ser182 bears the Pyruvic acid (Ser); by autocatalysis mark.

Belongs to the phosphatidylserine decarboxylase family. PSD-A subfamily. In terms of assembly, heterodimer of a large membrane-associated beta subunit and a small pyruvoyl-containing alpha subunit. It depends on pyruvate as a cofactor. In terms of processing, is synthesized initially as an inactive proenzyme. Formation of the active enzyme involves a self-maturation process in which the active site pyruvoyl group is generated from an internal serine residue via an autocatalytic post-translational modification. Two non-identical subunits are generated from the proenzyme in this reaction, and the pyruvate is formed at the N-terminus of the alpha chain, which is derived from the carboxyl end of the proenzyme. The post-translation cleavage follows an unusual pathway, termed non-hydrolytic serinolysis, in which the side chain hydroxyl group of the serine supplies its oxygen atom to form the C-terminus of the beta chain, while the remainder of the serine residue undergoes an oxidative deamination to produce ammonia and the pyruvoyl prosthetic group on the alpha chain.

Its subcellular location is the cell membrane. It catalyses the reaction a 1,2-diacyl-sn-glycero-3-phospho-L-serine + H(+) = a 1,2-diacyl-sn-glycero-3-phosphoethanolamine + CO2. Its pathway is phospholipid metabolism; phosphatidylethanolamine biosynthesis; phosphatidylethanolamine from CDP-diacylglycerol: step 2/2. Its function is as follows. Catalyzes the formation of phosphatidylethanolamine (PtdEtn) from phosphatidylserine (PtdSer). In Paraburkholderia phymatum (strain DSM 17167 / CIP 108236 / LMG 21445 / STM815) (Burkholderia phymatum), this protein is Phosphatidylserine decarboxylase proenzyme.